The following is a 104-amino-acid chain: AVIToxin-VAR2 (104 aa).

Positions 1-19 are cleaved as a signal peptide; the sequence is MRSLLCAPLLLLLLSAGES. 5 disulfide bridges follow: C26–C38, C32–C50, C37–C78, C60–C86, and C80–C96.

This sequence belongs to the AVIT (prokineticin) family. As to expression, expressed by the venom gland.

It is found in the secreted. In terms of biological role, potent agonist for both PKR1/PROKR1 and PKR2/PROKR2. Potently contracts gastrointestinal (GI) smooth muscle. This is AVIToxin-VAR2 from Varanus varius (Lace monitor lizard).